The sequence spans 468 residues: MAKRNAEKELTDRNWDQEDEAEEVGTFSMASEEVLKNRAIKKAKRRNVGFESDTGGAFKGFKGLVVPSGGGRFSGFGSGAGGKPLEGLSNGNNITSAPPFASAKAAADPKVAFGSLAANGPTTLVDKVSNPKTNGDSQQPSSSGLASSKACVGNAYHKQLAALNCSVRDWIVKHVNTNPLCDLTPIFKDYEKYLANIEQQHGNSGRNSESESNKVAAETQSPSLFGSTKLQQESTFLFHGNKTEDTPDKKMEVASEKKTDPSSLGATSASFNFGKKVDSSVLGSLSSVPLTGFSFSPGNSSLFGKDTTQSKPVSSPFPTKPLEGQAEGDSGECKGGDEEENDEPPKVVVTEVKEEDAFYSKKCKLFYKKDNEFKEKGIGTLHLKPTANQKTQLLVRADTNLGNILLNVLIPPNMPCTRTGKNNVLIVCVPNPPIDEKNATMPVTMLIRVKTSEDADELHKILLEKKDA.

The span at 1 to 16 (MAKRNAEKELTDRNWD) shows a compositional bias: basic and acidic residues. Residues 1 to 26 (MAKRNAEKELTDRNWDQEDEAEEVGT) form a disordered region. A2 is modified (N-acetylalanine). At K8 the chain carries N6-acetyllysine. S52 is subject to Phosphoserine. Copy 1 of the repeat occupies 76–77 (FG). The tract at residues 76-304 (FGSGAGGKPL…FSPGNSSLFG (229 aa)) is 5 X 2 AA repeats of F-G. K83 is subject to N6-acetyllysine. Repeat unit 2 spans residues 113–114 (FG). Disordered stretches follow at residues 122–148 (TTLV…LASS) and 201–224 (HGNS…SPSL). K127 is subject to N6-acetyllysine. The span at 137–148 (SQQPSSSGLASS) shows a compositional bias: low complexity. The tract at residues 144–206 (GLASSKACVG…IEQQHGNSGR (63 aa)) is binding to CDKN1B. Phosphoserine is present on residues S208 and S221. Repeat unit 3 spans residues 225–226 (FG). The residue at position 234 (S234) is a Phosphoserine. A disordered region spans residues 238–269 (FHGNKTEDTPDKKMEVASEKKTDPSSLGATSA). The segment covering 241-260 (NKTEDTPDKKMEVASEKKTD) has biased composition (basic and acidic residues). 2 positions are modified to phosphothreonine: T246 and T259. At S270 the chain carries Phosphoserine. Residues 273-274 (FG) form repeat 4. The residue at position 296 (S296) is a Phosphoserine. Repeat 5 spans residues 303-304 (FG). A compositionally biased stretch (polar residues) spans 304–317 (GKDTTQSKPVSSPF). The segment at 304–345 (GKDTTQSKPVSSPFPTKPLEGQAEGDSGECKGGDEEENDEPP) is disordered. The RanBD1 domain occupies 335–468 (GGDEEENDEP…HKILLEKKDA (134 aa)). K353 participates in a covalent cross-link: Glycyl lysine isopeptide (Lys-Gly) (interchain with G-Cter in SUMO2). K450 is subject to N6-acetyllysine.

As to quaternary structure, interacts with Importin alpha-2, Importin beta, Importin beta-2, NUP153, Ran binding protein 7, CDKN1B and itself. Does not interact with TPR. As to expression, ubiquitous. Highest levels in testis, peripheral blood leukocytes and fetal liver.

It localises to the nucleus. The protein resides in the nuclear pore complex. It is found in the nucleus membrane. Functionally, component of the nuclear pore complex that has a direct role in nuclear protein import. Actively displaces NLSs from importin-alpha, and facilitates disassembly of the importin-alpha:beta-cargo complex and importin recycling. Interacts with regulatory proteins of cell cycle progression including CDKN1B. This interaction is required for correct intracellular transport and degradation of CDKN1B. This is Nuclear pore complex protein Nup50 (NUP50) from Homo sapiens (Human).